Reading from the N-terminus, the 25-residue chain is uncharacterized protein (25 aa).

Its subcellular location is the plastid. The protein localises to the chloroplast. This is an uncharacterized protein from Trieres chinensis (Marine centric diatom).